The following is a 327-amino-acid chain: Tetraacyldisaccharide 4'-kinase (327 aa).

Residue 54-61 coordinates ATP; the sequence is TTGGTGKT. The segment at 78–106 is disordered; sequence PHILSRGHGGRERGPIGVNPNRSTPRDVG.

This sequence belongs to the LpxK family.

The catalysed reaction is a lipid A disaccharide + ATP = a lipid IVA + ADP + H(+). It functions in the pathway glycolipid biosynthesis; lipid IV(A) biosynthesis; lipid IV(A) from (3R)-3-hydroxytetradecanoyl-[acyl-carrier-protein] and UDP-N-acetyl-alpha-D-glucosamine: step 6/6. Transfers the gamma-phosphate of ATP to the 4'-position of a tetraacyldisaccharide 1-phosphate intermediate (termed DS-1-P) to form tetraacyldisaccharide 1,4'-bis-phosphate (lipid IVA). The chain is Tetraacyldisaccharide 4'-kinase from Gluconobacter oxydans (strain 621H) (Gluconobacter suboxydans).